The chain runs to 528 residues: Na(+)/H(+) antiporter NhaB (528 aa).

Topologically, residues 1 to 23 are cytoplasmic; it reads MPISLGNAFIKNFLGKAPDWYKV. A helical transmembrane segment spans residues 24-46; it reads AIIAFLIINPIVFFLINPFVAGW. The Periplasmic portion of the chain corresponds to 47–95; that stretch reads LLVAEFIFTLAMALKCYPLQPGGLLAIEAIAIGMTSPAQVKHELVANIE. A helical transmembrane segment spans residues 96-118; it reads VLLLLVFMVAGIYFMKHLLLFIF. Topologically, residues 119–129 are cytoplasmic; that stretch reads TKILLGIRSKT. The chain crosses the membrane as a helical span at residues 130–163; that stretch reads LLSLAFCFAAAFLSAFLDALTVIAVVISVAIGFY. Residues 164–239 lie on the Periplasmic side of the membrane; it reads SIYHKVASGN…ADQAGWLFGE (76 aa). Residues 240-262 traverse the membrane as a helical segment; sequence FLIRMSPVTLPVFFCGLITCALV. Residues 263-297 are Cytoplasmic-facing; sequence EKLKVFGYGAKLPNNVRQILVDFDNEERKTRTNQD. A helical membrane pass occupies residues 298 to 317; the sequence is VAKLWVQGLIAVWLIVALAL. At 318–320 the chain is on the periplasmic side; that stretch reads HLA. The helical transmembrane segment at 321 to 340 threads the bilayer; it reads AVGLIGLSVIILATAFTGVI. The Cytoplasmic portion of the chain corresponds to 341–352; that stretch reads EEHSMGKAFEEA. The chain crosses the membrane as a helical span at residues 353–375; that stretch reads LPFTALLAVFFSIVAVIIDQELF. Residues 376–389 are Periplasmic-facing; that stretch reads KPVIDAVLAVEDKG. Residues 390-412 traverse the membrane as a helical segment; that stretch reads TQLALFYVANGLLSMVSDNVFVG. Topologically, residues 413–477 are cytoplasmic; it reads TVYINEVKTA…PLIRLSYGRM (65 aa). Residues 478–500 form a helical membrane-spanning segment; it reads VIMALPYTIVLAIVGLMGIMFFL. Topologically, residues 501–528 are periplasmic; the sequence is EPATASFYDAGWILPHSGDLTPVVSGGH.

This sequence belongs to the NhaB Na(+)/H(+) (TC 2.A.34) antiporter family.

Its subcellular location is the cell inner membrane. The enzyme catalyses 2 Na(+)(in) + 3 H(+)(out) = 2 Na(+)(out) + 3 H(+)(in). Na(+)/H(+) antiporter that extrudes sodium in exchange for external protons. This chain is Na(+)/H(+) antiporter NhaB, found in Vibrio alginolyticus.